The following is a 989-amino-acid chain: ATP-dependent 6-phosphofructokinase subunit alpha (989 aa).

Residues 1-585 (MPEPSISDLS…SYENFLSVSK (585 aa)) are N-terminal catalytic PFK domain 1. Residues G220, 283 to 284 (RC), and 313 to 316 (GDGS) contribute to the ATP site. D314 serves as a coordination point for Mg(2+). Beta-D-fructose 6-phosphate is bound by residues 359–361 (SID), R396, 403–405 (MGR), E460, R487, and 493–496 (HVQR). D361 functions as the Proton acceptor in the catalytic mechanism. The tract at residues 586-599 (YDDGSYLVPESSRL) is interdomain linker. The segment at 600 to 989 (NIAIIHVGAP…LSGRLSIRTT (390 aa)) is C-terminal regulatory PFK domain 2. Beta-D-fructose 2,6-bisphosphate is bound by residues R670, 727 to 731 (TVSNN), R765, 772 to 774 (QGG), E832, R858, 864 to 867 (HVQQ), and R963.

Belongs to the phosphofructokinase type A (PFKA) family. ATP-dependent PFK group I subfamily. Eukaryotic two domain clade 'E' sub-subfamily. In terms of assembly, heterododecamer of 4 alpha, 4 beta and 4 gamma chains. Mg(2+) serves as cofactor.

The protein resides in the cytoplasm. It catalyses the reaction beta-D-fructose 6-phosphate + ATP = beta-D-fructose 1,6-bisphosphate + ADP + H(+). Its pathway is carbohydrate degradation; glycolysis; D-glyceraldehyde 3-phosphate and glycerone phosphate from D-glucose: step 3/4. With respect to regulation, allosterically activated by ADP, AMP, or fructose 2,6-bisphosphate, and allosterically inhibited by ATP or citrate. In terms of biological role, catalyzes the phosphorylation of D-fructose 6-phosphate to fructose 1,6-bisphosphate by ATP, the first committing step of glycolysis. This is ATP-dependent 6-phosphofructokinase subunit alpha (PFK1) from Komagataella pastoris (Yeast).